Here is a 137-residue protein sequence, read N- to C-terminus: Transcription antitermination protein NusB (137 aa).

It belongs to the NusB family.

In terms of biological role, involved in transcription antitermination. Required for transcription of ribosomal RNA (rRNA) genes. Binds specifically to the boxA antiterminator sequence of the ribosomal RNA (rrn) operons. In Clavibacter michiganensis subsp. michiganensis (strain NCPPB 382), this protein is Transcription antitermination protein NusB.